Here is a 391-residue protein sequence, read N- to C-terminus: NADH-quinone oxidoreductase subunit D (391 aa).

It belongs to the complex I 49 kDa subunit family. NDH-1 is composed of 14 different subunits. Subunits NuoB, C, D, E, F, and G constitute the peripheral sector of the complex.

The protein localises to the cell inner membrane. It carries out the reaction a quinone + NADH + 5 H(+)(in) = a quinol + NAD(+) + 4 H(+)(out). Its function is as follows. NDH-1 shuttles electrons from NADH, via FMN and iron-sulfur (Fe-S) centers, to quinones in the respiratory chain. The immediate electron acceptor for the enzyme in this species is believed to be ubiquinone. Couples the redox reaction to proton translocation (for every two electrons transferred, four hydrogen ions are translocated across the cytoplasmic membrane), and thus conserves the redox energy in a proton gradient. The sequence is that of NADH-quinone oxidoreductase subunit D from Rickettsia rickettsii (strain Iowa).